The chain runs to 258 residues: Pyridoxine 5'-phosphate synthase (258 aa).

3-amino-2-oxopropyl phosphate is bound at residue asparagine 16. Residue 18 to 19 (DH) coordinates 1-deoxy-D-xylulose 5-phosphate. Arginine 27 contributes to the 3-amino-2-oxopropyl phosphate binding site. Catalysis depends on histidine 52, which acts as the Proton acceptor. Residues arginine 54 and histidine 59 each coordinate 1-deoxy-D-xylulose 5-phosphate. The Proton acceptor role is filled by glutamate 79. Residue threonine 109 participates in 1-deoxy-D-xylulose 5-phosphate binding. Catalysis depends on histidine 200, which acts as the Proton donor. 3-amino-2-oxopropyl phosphate contacts are provided by residues glycine 201 and 222 to 223 (GH).

The protein belongs to the PNP synthase family. Homooctamer; tetramer of dimers.

It is found in the cytoplasm. The enzyme catalyses 3-amino-2-oxopropyl phosphate + 1-deoxy-D-xylulose 5-phosphate = pyridoxine 5'-phosphate + phosphate + 2 H2O + H(+). It functions in the pathway cofactor biosynthesis; pyridoxine 5'-phosphate biosynthesis; pyridoxine 5'-phosphate from D-erythrose 4-phosphate: step 5/5. Its function is as follows. Catalyzes the complicated ring closure reaction between the two acyclic compounds 1-deoxy-D-xylulose-5-phosphate (DXP) and 3-amino-2-oxopropyl phosphate (1-amino-acetone-3-phosphate or AAP) to form pyridoxine 5'-phosphate (PNP) and inorganic phosphate. In Burkholderia lata (strain ATCC 17760 / DSM 23089 / LMG 22485 / NCIMB 9086 / R18194 / 383), this protein is Pyridoxine 5'-phosphate synthase.